The primary structure comprises 272 residues: Putative phosphatase BU028/BU029 (272 aa).

Residue Asp8 is the Nucleophile of the active site. Asp8 lines the Mg(2+) pocket. Leu9 serves as a coordination point for phosphate. Asp10 contributes to the Mg(2+) binding site. Residues Ser42–Gly43 and Lys191 each bind phosphate. Mg(2+) is bound at residue Asp214. Asn217 contacts phosphate.

The protein belongs to the HAD-like hydrolase superfamily. Cof family. Requires Mg(2+) as cofactor.

This chain is Putative phosphatase BU028/BU029, found in Buchnera aphidicola subsp. Acyrthosiphon pisum (strain APS) (Acyrthosiphon pisum symbiotic bacterium).